Here is a 226-residue protein sequence, read N- to C-terminus: uncharacterized protein (226 aa).

The N-acetyltransferase domain maps to 18-219; that stretch reads LTIRNYTETD…YGVLMEWKNV (202 aa).

It belongs to the acetyltransferase family.

This is an uncharacterized protein from Bacillus subtilis (strain 168).